Here is a 59-residue protein sequence, read N- to C-terminus: MAVQQNKKSPSKRGMHRAHDFLTAPSLAVEPTTGEVHLRHHISPNGFYRGKKVVKAKGE.

The disordered stretch occupies residues 1-25; sequence MAVQQNKKSPSKRGMHRAHDFLTAP.

The protein belongs to the bacterial ribosomal protein bL32 family.

The polypeptide is Large ribosomal subunit protein bL32 (Azoarcus sp. (strain BH72)).